The sequence spans 208 residues: Protein-L-isoaspartate O-methyltransferase (208 aa).

Ser-59 is an active-site residue.

This sequence belongs to the methyltransferase superfamily. L-isoaspartyl/D-aspartyl protein methyltransferase family.

The protein resides in the cytoplasm. The catalysed reaction is [protein]-L-isoaspartate + S-adenosyl-L-methionine = [protein]-L-isoaspartate alpha-methyl ester + S-adenosyl-L-homocysteine. Functionally, catalyzes the methyl esterification of L-isoaspartyl residues in peptides and proteins that result from spontaneous decomposition of normal L-aspartyl and L-asparaginyl residues. It plays a role in the repair and/or degradation of damaged proteins. The protein is Protein-L-isoaspartate O-methyltransferase of Pectobacterium carotovorum subsp. carotovorum (strain PC1).